The sequence spans 504 residues: Maturase K (504 aa).

This sequence belongs to the intron maturase 2 family. MatK subfamily.

Its subcellular location is the plastid. The protein resides in the chloroplast. In terms of biological role, usually encoded in the trnK tRNA gene intron. Probably assists in splicing its own and other chloroplast group II introns. In Quercus petraea (Durmast oak), this protein is Maturase K.